Here is a 1356-residue protein sequence, read N- to C-terminus: MAQSFTGKKRIRKSFGRIPEAVQMPNLIEVQRSSYEQFLQREVRAGERRDEGIEAVFKSVFPIKDFNERAVLEYVSYEFEEPKYDVEECVQRDMTYAAPLKVKLRLIVFETDEETGARSVKDIKEQDVYMGDIPLMTEKGTFIVNGTQRVIVSQMHRSPGVFFDHDKGKTHASGKLLFAARVIPYRGSWLDFEFDAKDIVYVRIDRRRKLPATTFLMALGMDGEEILSTFYETVPYEKKGDGWATPYKPERWRGVKPEFPLIDADTGEEIAPAGQKISARNAKKFADNGLKTLLLAPEALTGRYLAKDLVNFETGEIYAEAGDELDPTLLAALEEQGFTTLDVLDIDEVTVGAYIRNTLRVDKNTAREDALFDIYRVMRPGEPPTVEAAEAMFKSLFFDSERYDLSSVGRVKMNMRLELDCPDDVRVIRKEDVIAVLLTLVGLRDGRGEIDDIDNLGNRRVRSVGELLENQYRVGLLRMERAIKERMSSVDIDTVMPHDLINAKPAAAAVREFFGSSQLSQFMDQTNPLSEITHKRRLSALGPGGLTRERAGFEVRDVHPTHYGRICPIETPEGPNIGLINSLATHAVVNKYGFIESPYRRIRDGKTTDEVVYMSAMEEAKHVIAQANIKLENGEIVEDLVPGRINGEPSLLPKADVDLMDVSPKQVVSVAASLIPFLENDDANRALMGSNMQKQAVPLIQSDAPLVGTGMESIVAVDSGAVVVARRTGVVEQIDGTRIVVRATEETDPSKPGVDIYRLQKFQRSNTSTCINQRPLVRVGDKINAGDVIADGPSTELGELALGRNALVAFMPWNGYNFEDSILISERIVRDDVFTSIHIEEFEVMARDTKLGPEEITRDIPNVGEEALRNLDEAGIVAIGAEVQPGDILVGKVTPKGESPMTPEEKLLRAIFGEKASDVRDTSLRLPPGVSGTIVEVRVFNRHGVDKDERALAIERAEIDRLGKDRDDEFAILNRNMQGRLRQLLVGKTAVSGPKGLGRGEITAEKLEEIAPGLWWQIALDDEKAMGELEALRKQFDDARKRLDRRFEDKVDKLQRGDELPPGVMKMVKVFVAVKRKLQPGDKMAGRHGNKGVISKILPIEDMPYLEDGTSVDIVLNPLGVPSRMNVGQIFETHLGWAAAGLGKQVQRLLEDWQHGGQKQALIEHLRDVYGPDEELPDTEEELVELARNLSKGIPFATPVFDGAHIDDIENLLEKAGLDRSGQSYLYDGQSGERFKRPVTVGYIYMLKLHHLVDDKIHARSIGPYSLVTQQPLGGKAQFGGQRFGEMEVWALEAYGAAYTLQEMLTVKSDDVAGRTKVYESIVRGDDTFEAGIPESFNVLVKEMRSLGLNVELENS.

It belongs to the RNA polymerase beta chain family. As to quaternary structure, the RNAP catalytic core consists of 2 alpha, 1 beta, 1 beta' and 1 omega subunit. When a sigma factor is associated with the core the holoenzyme is formed, which can initiate transcription.

The catalysed reaction is RNA(n) + a ribonucleoside 5'-triphosphate = RNA(n+1) + diphosphate. In terms of biological role, DNA-dependent RNA polymerase catalyzes the transcription of DNA into RNA using the four ribonucleoside triphosphates as substrates. This is DNA-directed RNA polymerase subunit beta from Phenylobacterium zucineum (strain HLK1).